A 417-amino-acid chain; its full sequence is Phosphoglycerate kinase (417 aa).

Positions 23, 24, 25, 26, 38, 39, 62, 63, 65, 66, 121, 122, 169, and 170 each coordinate (2R)-3-phosphoglycerate. Glycine 213 contributes to the ADP binding site. Glycine 213 is a binding site for CDP. AMP contacts are provided by alanine 214 and lysine 215. Alanine 214 provides a ligand contact to ATP. Alanine 214 is a binding site for Mg(2+). Aspartate 218 is a CDP binding site. Aspartate 218 provides a ligand contact to Mg(2+). Residue lysine 219 coordinates AMP. Lysine 219 is a binding site for ATP. Glycine 237 contributes to the ADP binding site. Glycine 237 lines the CDP pocket. 2 residues coordinate AMP: glycine 238 and glycine 312. Residues glycine 238 and glycine 312 each contribute to the ATP site. The CDP site is built by glycine 337 and phenylalanine 342. Phenylalanine 342 lines the ADP pocket. Glutamate 343 provides a ligand contact to AMP. 3 residues coordinate ATP: glutamate 343, aspartate 374, and threonine 375. Aspartate 374 is a binding site for Mg(2+).

It belongs to the phosphoglycerate kinase family. As to quaternary structure, monomer. Mg(2+) is required as a cofactor.

Its subcellular location is the cytoplasm. It localises to the secreted. The protein localises to the cell wall. It is found in the mitochondrion. The enzyme catalyses (2R)-3-phosphoglycerate + ATP = (2R)-3-phospho-glyceroyl phosphate + ADP. It functions in the pathway carbohydrate degradation; glycolysis; pyruvate from D-glyceraldehyde 3-phosphate: step 2/5. Catalyzes one of the two ATP producing reactions in the glycolytic pathway via the reversible conversion of 1,3-diphosphoglycerate to 3-phosphoglycerate. Both L- and D- forms of purine and pyrimidine nucleotides can be used as substrates, but the activity is much lower on pyrimidines. Negatively regulates the biosynthesis of acetyl-CoA from pyruvate in the mitochondrion. The sequence is that of Phosphoglycerate kinase (PGK1) from Candida albicans (strain SC5314 / ATCC MYA-2876) (Yeast).